Reading from the N-terminus, the 299-residue chain is Mitochondrial magnesium exporter 1 (299 aa).

3 Solcar repeats span residues 12–103 (SNPV…GKRL), 112–200 (LTYP…LQEL), and 210–296 (ISTT…TNDL). 4 consecutive transmembrane segments (helical) span residues 79 to 99 (ISAP…VYAA), 114 to 134 (YPQI…VTVP), 216 to 236 (ILSG…FDVL), and 272 to 292 (ILPI…GVEL).

This sequence belongs to the mitochondrial carrier (TC 2.A.29) family.

The protein resides in the mitochondrion membrane. In terms of biological role, mediates efflux of magnesium ions from mitochondria, suggesting a role in magnesium homeostasis. This chain is Mitochondrial magnesium exporter 1, found in Drosophila melanogaster (Fruit fly).